The sequence spans 372 residues: GTPase Obg (372 aa).

The region spanning 1–159 (MKFIDEARIE…RMLKLELKVL (159 aa)) is the Obg domain. A disordered region spans residues 128-147 (LHFKSSTNRAPRQKTDGKPG). The 175-residue stretch at 160-334 (ADVGLLGMPN…LVYAIHDYLV (175 aa)) folds into the OBG-type G domain. GTP is bound by residues 166 to 173 (GMPNAGKS), 191 to 195 (FTTLA), 213 to 216 (DIPG), 284 to 287 (NKLD), and 315 to 317 (SAL). Positions 173 and 193 each coordinate Mg(2+).

The protein belongs to the TRAFAC class OBG-HflX-like GTPase superfamily. OBG GTPase family. Monomer. Mg(2+) is required as a cofactor.

Its subcellular location is the cytoplasm. Its function is as follows. An essential GTPase which binds GTP, GDP and possibly (p)ppGpp with moderate affinity, with high nucleotide exchange rates and a fairly low GTP hydrolysis rate. Plays a role in control of the cell cycle, stress response, ribosome biogenesis and in those bacteria that undergo differentiation, in morphogenesis control. The chain is GTPase Obg from Burkholderia mallei (strain NCTC 10247).